The chain runs to 275 residues: Phosphate import ATP-binding protein PstB (275 aa).

The ABC transporter domain occupies 29 to 270 (LEIKDLDLYY…PNKKKTEDYI (242 aa)). 61–68 (GPSGCGKS) serves as a coordination point for ATP.

Belongs to the ABC transporter superfamily. Phosphate importer (TC 3.A.1.7) family. The complex is composed of two ATP-binding proteins (PstB), two transmembrane proteins (PstC and PstA) and a solute-binding protein (PstS).

It localises to the cell inner membrane. It carries out the reaction phosphate(out) + ATP + H2O = ADP + 2 phosphate(in) + H(+). Part of the ABC transporter complex PstSACB involved in phosphate import. Responsible for energy coupling to the transport system. This chain is Phosphate import ATP-binding protein PstB, found in Pseudoalteromonas translucida (strain TAC 125).